Reading from the N-terminus, the 203-residue chain is Inosine triphosphate pyrophosphatase (203 aa).

13 to 18 contacts ITP; sequence TGNAKK. E43 is a Mg(2+) binding site. ITP-binding positions include K55, 71 to 72, K88, 147 to 150, K170, and 175 to 176; these read DT, FGWD, and HR.

It belongs to the HAM1 NTPase family. As to quaternary structure, homodimer. Mg(2+) is required as a cofactor. It depends on Mn(2+) as a cofactor.

It localises to the cytoplasm. The catalysed reaction is ITP + H2O = IMP + diphosphate + H(+). It carries out the reaction dITP + H2O = dIMP + diphosphate + H(+). It catalyses the reaction XTP + H2O = XMP + diphosphate + H(+). The enzyme catalyses N(6)-hydroxy-dATP + H2O = N(6)-hydroxy-dAMP + diphosphate + H(+). Functionally, pyrophosphatase that hydrolyzes the non-canonical purine nucleotides inosine triphosphate (ITP), deoxyinosine triphosphate (dITP) as well as 2'-deoxy-N-6-hydroxylaminopurine triphosphate (dHAPTP) and xanthosine 5'-triphosphate (XTP) to their respective monophosphate derivatives. The enzyme does not distinguish between the deoxy- and ribose forms. Probably excludes non-canonical purines from RNA and DNA precursor pools, thus preventing their incorporation into RNA and DNA and avoiding chromosomal lesions. The polypeptide is Inosine triphosphate pyrophosphatase (itpa) (Danio rerio (Zebrafish)).